Here is a 377-residue protein sequence, read N- to C-terminus: Floricaula/leafy homolog (377 aa).

A compositionally biased stretch (basic and acidic residues) spans 116–126; sequence RRRLDEEDPRR. Residues 116–190 form a disordered region; that stretch reads RRRLDEEDPR…RKKGQRKVVD (75 aa). Residues 131 to 141 are compositionally biased toward polar residues; the sequence is SGDNNTNTLDA. 3 consecutive DNA-binding regions follow at residues 206-210, 275-282, and 346-349; these read REHPF, NKPKMRHY, and YVPT.

This sequence belongs to the FLO/LFY family. In developing inflorescences, leaf primordia and very young leaves.

It localises to the nucleus. Probable transcription factor. The protein is Floricaula/leafy homolog (FL) of Populus trichocarpa (Western balsam poplar).